Here is a 449-residue protein sequence, read N- to C-terminus: Tubulin beta-2 chain (449 aa).

Positions 11 and 69 each coordinate GTP. A Mg(2+)-binding site is contributed by glutamate 69. Histidine 137 bears the Methylhistidine mark. 6 residues coordinate GTP: serine 138, glycine 142, threonine 143, glycine 144, asparagine 204, and asparagine 226.

Belongs to the tubulin family. Dimer of alpha and beta chains. A typical microtubule is a hollow water-filled tube with an outer diameter of 25 nm and an inner diameter of 15 nM. Alpha-beta heterodimers associate head-to-tail to form protofilaments running lengthwise along the microtubule wall with the beta-tubulin subunit facing the microtubule plus end conferring a structural polarity. Microtubules usually have 13 protofilaments but different protofilament numbers can be found in some organisms and specialized cells. The cofactor is Mg(2+).

The protein localises to the cytoplasm. The protein resides in the cytoskeleton. Tubulin is the major constituent of microtubules, a cylinder consisting of laterally associated linear protofilaments composed of alpha- and beta-tubulin heterodimers. Microtubules grow by the addition of GTP-tubulin dimers to the microtubule end, where a stabilizing cap forms. Below the cap, tubulin dimers are in GDP-bound state, owing to GTPase activity of alpha-tubulin. This chain is Tubulin beta-2 chain (tubC), found in Emericella nidulans (strain FGSC A4 / ATCC 38163 / CBS 112.46 / NRRL 194 / M139) (Aspergillus nidulans).